The primary structure comprises 342 residues: S-adenosylmethionine:tRNA ribosyltransferase-isomerase (342 aa).

The protein belongs to the QueA family. Monomer.

The protein localises to the cytoplasm. It catalyses the reaction 7-aminomethyl-7-carbaguanosine(34) in tRNA + S-adenosyl-L-methionine = epoxyqueuosine(34) in tRNA + adenine + L-methionine + 2 H(+). It participates in tRNA modification; tRNA-queuosine biosynthesis. Its function is as follows. Transfers and isomerizes the ribose moiety from AdoMet to the 7-aminomethyl group of 7-deazaguanine (preQ1-tRNA) to give epoxyqueuosine (oQ-tRNA). The protein is S-adenosylmethionine:tRNA ribosyltransferase-isomerase of Listeria monocytogenes serotype 4b (strain F2365).